The chain runs to 835 residues: Protein bicaudal D homolog 1 (835 aa).

Residues Met-1–Ser-264 adopt a coiled-coil conformation. Residues Glu-278–Asn-297 are disordered. A coiled-coil region spans residues Glu-320 to Tyr-519. Disordered regions lie at residues Arg-545–Ser-616 and Asp-800–Asn-835. The segment covering Gly-557 to Val-572 has biased composition (low complexity). The span at Val-581–Lys-590 shows a compositional bias: basic and acidic residues. A compositionally biased stretch (low complexity) spans Glu-591–Ile-604. A coiled-coil region spans residues Ile-663–Gln-803. The segment at Ile-663–Gln-803 is interaction with RAB6A.

It belongs to the BicD family. In terms of assembly, interacts with RAB6A. Interacts (via C-terminus) with RAB6B (GTP-bound); the interaction is direct. Interacts with CLIP-115 and KIFC2. In terms of tissue distribution, expressed in the brain, heart and skeletal muscle.

The protein resides in the golgi apparatus. Its function is as follows. Regulates coat complex coatomer protein I (COPI)-independent Golgi-endoplasmic reticulum transport by recruiting the dynein-dynactin motor complex. This Mus musculus (Mouse) protein is Protein bicaudal D homolog 1 (Bicd1).